The primary structure comprises 318 residues: Cuticle collagen dpy-7 (318 aa).

Triple-helical region regions lie at residues 101 to 130 (GPIG…DGLD), 147 to 206 (GPPG…PGDD), 209 to 235 (GGTG…NGLP), and 240 to 278 (GPPG…PGGH). The tract at residues 101 to 318 (GPIGPPGVSG…GYSGGGYGKK (218 aa)) is disordered. The segment covering 187 to 204 (PQGEPGEQGEPGIKGPPG) has biased composition (low complexity). 2 stretches are compositionally biased toward pro residues: residues 216-228 (PPGP…PKGP) and 250-268 (PPGP…PFGP). Residues 309-318 (GYSGGGYGKK) show a composition bias toward gly residues.

The protein belongs to the cuticular collagen family. In terms of assembly, collagen polypeptide chains are complexed within the cuticle by disulfide bonds and other types of covalent cross-links.

In terms of biological role, nematode cuticles are composed largely of collagen-like proteins. The cuticle functions both as an exoskeleton and as a barrier to protect the worm from its environment. Mutations in dpy-7 affects the body shape. In Caenorhabditis elegans, this protein is Cuticle collagen dpy-7 (dpy-7).